The chain runs to 521 residues: Probable inorganic phosphate transporter 1-3 (521 aa).

The Cytoplasmic portion of the chain corresponds to 1–24 (MADQQLGVLKALDVAKTQLYHFTA). Residues 25–45 (IVIAGMGFFTDAYDLFCVSLV) traverse the membrane as a helical segment. At 46–70 (TKLLGRLYYFNPTSAKPGSLPPHVA) the chain is on the extracellular side. A helical transmembrane segment spans residues 71–91 (AAVNGVALCGTLAGQLFFGWL). Residues 92 to 99 (GDKLGRKK) lie on the Cytoplasmic side of the membrane. Residues 100-120 (VYGITLIMMILCSVASGLSLG) form a helical membrane-spanning segment. The Extracellular portion of the chain corresponds to 121–131 (NSAKGVMTTLC). Residues 132-152 (FFRFWLGFGIGGDYPLSATIM) form a helical membrane-spanning segment. The Cytoplasmic segment spans residues 153–161 (SEYANKKTR). Residues 162–182 (GAFIAAVFAMQGVGILAGGFV) form a helical membrane-spanning segment. The Extracellular segment spans residues 183 to 211 (ALAVSSIFDKKFPSPTYEQDRFLSTPPQA). Residues 212–232 (DYIWRIIVMFGALPAALTYYW) traverse the membrane as a helical segment. The Cytoplasmic portion of the chain corresponds to 233–292 (RMKMPETARYTALVAKNIKQATADMSKVLQTDLELEERVEDDVKDPKKNYGLFSKEFLRR). A helical membrane pass occupies residues 293–313 (HGLHLLGTTSTWFLLDIAFYS). The Extracellular segment spans residues 314-348 (QNLFQKDIFSAIGWIPKAATMNAIHEVFKIARAQT). The helical transmembrane segment at 349–369 (LIALCSTVPGYWFTVAFIDII) threads the bilayer. Residues 370–371 (GR) are Cytoplasmic-facing. The chain crosses the membrane as a helical span at residues 372–392 (FAIQLMGFFMMTVFMFAIAFP). The Extracellular portion of the chain corresponds to 393 to 402 (YNHWILPDNR). Residues 403 to 423 (IGFVVMYSLTFFFANFGPNAT) form a helical membrane-spanning segment. The Cytoplasmic portion of the chain corresponds to 424-441 (TFIVPAEIFPARLRSTCH). A helical transmembrane segment spans residues 442–462 (GISAATGKAGAIVGAFGFLYA). Over 463 to 484 (AQPQDKTKTDAGYPPGIGVKNS) the chain is Extracellular. A helical membrane pass occupies residues 485 to 505 (LIMLGVINFVGMLFTFLVPEP). Residues 506-521 (KGKSLEELSGEAEVDK) are Cytoplasmic-facing.

The protein belongs to the major facilitator superfamily. Phosphate:H(+) symporter (TC 2.A.1.9) family. In terms of tissue distribution, mainly expressed in roots, especially in the stele of the primary root, the pericycle and trichoblasts of secondary roots. To a lower extent, present in hydathodes and vascular tissues of young leaves.

It is found in the membrane. Functionally, high-affinity transporter for external inorganic phosphate. The chain is Probable inorganic phosphate transporter 1-3 (PHT1-3) from Arabidopsis thaliana (Mouse-ear cress).